Consider the following 93-residue polypeptide: Large ribosomal subunit protein uL23cz/uL23cy (93 aa).

The protein belongs to the universal ribosomal protein uL23 family. Part of the 50S ribosomal subunit.

The protein localises to the plastid. It localises to the chloroplast. Its function is as follows. Binds to 23S rRNA. The sequence is that of Large ribosomal subunit protein uL23cz/uL23cy (rpl23-A) from Glycine max (Soybean).